Reading from the N-terminus, the 669-residue chain is Acyl-coenzyme A oxidase 1 (669 aa).

2 residues coordinate FAD: threonine 152 and glycine 191. Glutamate 434 (proton acceptor) is an active-site residue. Phosphotyrosine is present on tyrosine 544. Residue serine 551 is modified to Phosphoserine. A Microbody targeting signal motif is present at residues 667 to 669 (AHL).

Belongs to the acyl-CoA oxidase family. In terms of assembly, homodimer. FAD serves as cofactor. Expressed in glia.

The protein resides in the peroxisome. The protein localises to the nucleus. It carries out the reaction a 2,3-saturated acyl-CoA + O2 = a (2E)-enoyl-CoA + H2O2. Its pathway is lipid metabolism; peroxisomal fatty acid beta-oxidation. Functionally, catalyzes the desaturation of acyl-CoAs to 2-trans-enoyl-CoAs. First enzyme of the fatty acid beta-oxidation pathway. The protein is Acyl-coenzyme A oxidase 1 of Drosophila melanogaster (Fruit fly).